Here is a 1009-residue protein sequence, read N- to C-terminus: DENN domain-containing protein 1A (1009 aa).

Residues 13 to 145 (FEVYVEVAYP…HKLPIPDPGV (133 aa)) enclose the uDENN domain. The 137-residue stretch at 162-298 (ELPSIPENRN…VISSLKNRLK (137 aa)) folds into the cDENN domain. The region spanning 300 to 378 (VSTTTGDGVA…DGRLDLLNSG (79 aa)) is the dDENN domain. Positions 381-385 (FSDVF) match the FXDXF motif motif. Residues 453–564 (DIAENGCAPT…TGPVPAPPDR (112 aa)) form a disordered region. Ser473 bears the Phosphoserine mark. Basic and acidic residues predominate over residues 477–489 (EAKDPKLREDRRP). The span at 500-509 (PRPHVVKRPK) shows a compositional bias: basic residues. Phosphothreonine is present on Thr519. Ser520, Ser523, Ser536, Ser538, and Ser546 each carry phosphoserine. The Clathrin box motif lies at 569–578 (DLLEDVFSNL). Ser592 bears the Phosphoserine mark. The interval 648–714 (IPSKPPAASP…RKTPELGIVP (67 aa)) is disordered. Ser749 carries the post-translational modification Phosphoserine. Disordered stretches follow at residues 796 to 831 (STLP…QPPL) and 928 to 1009 (RSSA…ETFE). 2 stretches are compositionally biased toward pro residues: residues 820–831 (AGTPTPFPQPPL) and 945–957 (GDPP…PPQG). Over residues 972–983 (DPFEDLLQKTKQ) the composition is skewed to basic and acidic residues. Over residues 986 to 997 (SPSPALAPAPDS) the composition is skewed to low complexity. Positions 999–1009 (EQLRKQWETFE) are enriched in basic and acidic residues.

In terms of assembly, interacts with RAB35. Interacts with clathrin and with the adapter protein complex 2, AP-2. Interacts with ITSN1 and SH3GL2. Interacts (when phosphorylated) with YWHAE. In terms of processing, phosphorylated on serine and/or threonine in an Akt-dependent manner. Phosphorylation probably regulates the guanine nucleotide exchange factor (GEF) activity, possibly by disrupting an intramolecular interaction between the DENN domain and the C-terminus of the protein, thereby relieving the autoinhibition.

The protein localises to the cytoplasmic vesicle. Its subcellular location is the clathrin-coated vesicle membrane. The protein resides in the presynaptic cell membrane. The guanine nucleotide exchange factor (GEF) activity is autoinhibited. Autoinhibition may be the result of intramolecular interaction between the DENN domain and the C-terminus, which is disrupted upon phosphorylation. Activation is regulated by Akt activation. Functionally, guanine nucleotide exchange factor (GEF) regulating clathrin-mediated endocytosis through RAB35 activation. Promotes the exchange of GDP to GTP, converting inactive GDP-bound RAB35 into its active GTP-bound form. Regulates clathrin-mediated endocytosis of synaptic vesicles and mediates exit from early endosomes. Binds phosphatidylinositol-phosphates (PtdInsPs), with some preference for PtdIns(3)P. In Homo sapiens (Human), this protein is DENN domain-containing protein 1A.